A 308-amino-acid polypeptide reads, in one-letter code: HPr kinase/phosphorylase (308 aa).

Catalysis depends on residues H136 and K157. Residue 151 to 158 (GESGIGKS) coordinates ATP. Mg(2+) is bound at residue S158. The active-site Proton acceptor; for phosphorylation activity. Proton donor; for dephosphorylation activity is the D175. The important for the catalytic mechanism of both phosphorylation and dephosphorylation stretch occupies residues 198 to 207 (IEVRGMGIID). E199 is a Mg(2+) binding site. The active site involves R240. The interval 261 to 266 (PIRPGR) is important for the catalytic mechanism of dephosphorylation.

It belongs to the HPrK/P family. As to quaternary structure, homohexamer. It depends on Mg(2+) as a cofactor.

It carries out the reaction [HPr protein]-L-serine + ATP = [HPr protein]-O-phospho-L-serine + ADP + H(+). The enzyme catalyses [HPr protein]-O-phospho-L-serine + phosphate + H(+) = [HPr protein]-L-serine + diphosphate. In terms of biological role, catalyzes the ATP- as well as the pyrophosphate-dependent phosphorylation of a specific serine residue in HPr, a phosphocarrier protein of the phosphoenolpyruvate-dependent sugar phosphotransferase system (PTS). HprK/P also catalyzes the pyrophosphate-producing, inorganic phosphate-dependent dephosphorylation (phosphorolysis) of seryl-phosphorylated HPr (P-Ser-HPr). The two antagonistic activities of HprK/P are regulated by several intracellular metabolites, which change their concentration in response to the absence or presence of rapidly metabolisable carbon sources (glucose, fructose, etc.) in the growth medium. Therefore, by controlling the phosphorylation state of HPr, HPrK/P is a sensor enzyme that plays a major role in the regulation of carbon metabolism and sugar transport: it mediates carbon catabolite repression (CCR), and regulates PTS-catalyzed carbohydrate uptake and inducer exclusion. The sequence is that of HPr kinase/phosphorylase from Clostridium kluyveri (strain NBRC 12016).